Reading from the N-terminus, the 688-residue chain is DNA-directed RNA polymerase subunit beta' (688 aa).

Residues Cys69, Cys71, Cys87, and Cys90 each contribute to the Zn(2+) site. Asp489, Asp491, and Asp493 together coordinate Mg(2+).

Belongs to the RNA polymerase beta' chain family. RpoC1 subfamily. In terms of assembly, in plastids the minimal PEP RNA polymerase catalytic core is composed of four subunits: alpha, beta, beta', and beta''. When a (nuclear-encoded) sigma factor is associated with the core the holoenzyme is formed, which can initiate transcription. The cofactor is Mg(2+). It depends on Zn(2+) as a cofactor.

The protein resides in the plastid. It is found in the chloroplast. The catalysed reaction is RNA(n) + a ribonucleoside 5'-triphosphate = RNA(n+1) + diphosphate. Functionally, DNA-dependent RNA polymerase catalyzes the transcription of DNA into RNA using the four ribonucleoside triphosphates as substrates. The sequence is that of DNA-directed RNA polymerase subunit beta' from Piper cenocladum (Ant piper).